Reading from the N-terminus, the 766-residue chain is Pumilio domain-containing protein 12 (766 aa).

2 disordered regions span residues Lys63–Lys98 and Ala152–Ser197. Positions Ser79–Ser88 are enriched in polar residues. A compositionally biased stretch (acidic residues) spans Pro179–Gly193. Positions Ala245–Tyr602 constitute a PUM-HD domain. Pumilio repeat units follow at residues Glu313–Asn348, Ser461–Lys496, Asn497–Ser534, and Glu535–Thr571.

The protein is Pumilio domain-containing protein 12 (puf-12) of Caenorhabditis elegans.